The following is a 203-amino-acid chain: Small ribosomal subunit protein uS7 (203 aa).

The interval 1–21 (MSSEAPEPDAPASTDDERVSA) is disordered.

It belongs to the universal ribosomal protein uS7 family. Part of the 30S ribosomal subunit.

Functionally, one of the primary rRNA binding proteins, it binds directly to 16S rRNA where it nucleates assembly of the head domain of the 30S subunit. Is located at the subunit interface close to the decoding center. The sequence is that of Small ribosomal subunit protein uS7 from Natronomonas pharaonis (strain ATCC 35678 / DSM 2160 / CIP 103997 / JCM 8858 / NBRC 14720 / NCIMB 2260 / Gabara) (Halobacterium pharaonis).